A 1577-amino-acid polypeptide reads, in one-letter code: Dynamin-binding protein (1577 aa).

Methionine 1 is subject to N-acetylmethionine. SH3 domains lie at 2–61 (EPGS…IVTI), 66–126 (EGER…ELCL), and 145–204 (YSMG…LLGP). The segment at 209 to 242 (DESVNAGSGDDSTLNDEVDVSPEEVESEGDEDDQ) is disordered. Residues 221 to 242 (TLNDEVDVSPEEVESEGDEDDQ) are compositionally biased toward acidic residues. An SH3 4 domain is found at 243 to 302 (QAGTYGIALYRFQALESNELDFEVGDKIRILGTLEDGWLEGRLKGKTGIFPHRFVKLCPS). Disordered regions lie at residues 307-361 (ETMA…EEPL) and 375-437 (GQDE…SRQC). Residues 400–410 (PDLSQEVNGIS) show a composition bias toward polar residues. Serine 494 bears the Phosphoserine mark. Disordered regions lie at residues 519–547 (PERP…DNLD) and 590–681 (RGSS…SEYT). Over residues 617–626 (TPTSTSPHLL) the composition is skewed to low complexity. Over residues 632 to 651 (KPGPPLVVRPSRPAPLPPPT) the composition is skewed to pro residues. Residues 652 to 662 (QQRLNTASPKP) are compositionally biased toward polar residues. Basic and acidic residues predominate over residues 672–681 (APEKEGSEYT). Serine 684 carries the phosphoserine modification. Positions 705–755 (LDMHTRAQEELNLLLEEKQDESLRAETLETLKSYESTIQSLNLELQQLREM) form a coiled coil. A DH domain is found at 784–967 (KRAKVVAELL…KEINANINEY (184 aa)). A BAR domain is found at 1008 to 1217 (LKHLTGFAPQ…LKASDREGNL (210 aa)). In terms of domain architecture, SH3 5 spans 1285–1348 (PPEKLFHVQR…YSSFLKPYNP (64 aa)). Positions 1353–1375 (SDSSVVSHSSTESEHSGSSPSFH) are enriched in low complexity. 2 disordered regions span residues 1353–1381 (SDSS…NSSS) and 1415–1510 (ETLG…LGSS). Composition is skewed to polar residues over residues 1418-1428 (GVSSNTGNPET) and 1484-1497 (DQGS…SRAC). The region spanning 1513-1576 (EGNQVYFAIY…PSNYIRKTEY (64 aa)) is the SH3 6 domain.

In terms of assembly, binds DNM1 via its N-terminal SH3 domains. The C-terminal SH3 domain binds a complex containing actin, tubulin, Hsp70 and actin-regulatory proteins, such as ENAH, EVL, WIRE, CR16, WAVE1 and NAP1L1. Interacts with FASLG. Interacts (via SH3 domain 6) with WASL. Interacts (via SH3 domain 6) interacts with ENAH. Interacts (via C-terminal domain) with TJP1; required for the apical cell-cell junction localization of DNMBP. As to expression, widely expressed.

It localises to the cytoplasm. The protein localises to the golgi apparatus. Its subcellular location is the golgi stack. It is found in the cytoskeleton. The protein resides in the synapse. It localises to the cell junction. Functionally, plays a critical role as a guanine nucleotide exchange factor (GEF) for CDC42 in several intracellular processes associated with the actin and microtubule cytoskeleton. Regulates the structure of apical junctions in epithelial cells. Participates in the normal lumenogenesis of epithelial cell cysts by regulating spindle orientation. Plays a role in ciliogenesis. May play a role in membrane trafficking between the cell surface and the Golgi. This Rattus norvegicus (Rat) protein is Dynamin-binding protein.